We begin with the raw amino-acid sequence, 576 residues long: MLFSKLFAPTLKEPPKDAVLKSPKHPGKAGYIYQIGSGIYNFLPLAKKVLDKIENVTHKRMQEHGAQNILMSFVVLASLWEKSGRLDKYGKELLVFKDRKDNDFVLSPTLEENITEIAANFIKSYKQLPVHLYQIHTKFRDEIRPRFGLVRAREFIMKDGYSFHEDAESLDKEFLNTQSAYKEILSDLGLDFRIVEADSGAIGGSKSREFVVLTECGEDTIVVCQNCDYAANIEIAKRSKRTEPLMSPSALAKFPTPNTTSAPSVAEFFKTEPYFVLKALVNKVIHKDKETLACFFVRGDDNLEETKALNTLNLLGANALELREANEEDLNKAGLIAGFIGPYGLKKHVCYIIFDEDLKEGDCLIVGANEKDFHAVGVDLKGFENLVYADIVQVKESDCCPNCQGALKYHKSLEVGHIFKLGQSYAKSLKASFLDKNGKERFFEMGCYGIGISRLLSVILEQKSDDLGCVWTKNTAPFDVVIVVSNLKDEAQKKLAFEVYERLLQKGVDALLDDRDARFGAKMRDFELIGERLALIVGKQTLESKEFECIKRANLEKQTIKDIELEEKILEMLASE.

The protein belongs to the class-II aminoacyl-tRNA synthetase family. ProS type 1 subfamily. As to quaternary structure, homodimer.

The protein localises to the cytoplasm. It catalyses the reaction tRNA(Pro) + L-proline + ATP = L-prolyl-tRNA(Pro) + AMP + diphosphate. Functionally, catalyzes the attachment of proline to tRNA(Pro) in a two-step reaction: proline is first activated by ATP to form Pro-AMP and then transferred to the acceptor end of tRNA(Pro). As ProRS can inadvertently accommodate and process non-cognate amino acids such as alanine and cysteine, to avoid such errors it has two additional distinct editing activities against alanine. One activity is designated as 'pretransfer' editing and involves the tRNA(Pro)-independent hydrolysis of activated Ala-AMP. The other activity is designated 'posttransfer' editing and involves deacylation of mischarged Ala-tRNA(Pro). The misacylated Cys-tRNA(Pro) is not edited by ProRS. This Helicobacter pylori (strain J99 / ATCC 700824) (Campylobacter pylori J99) protein is Proline--tRNA ligase.